Reading from the N-terminus, the 350-residue chain is Phosphate acyltransferase (350 aa).

This sequence belongs to the PlsX family. In terms of assembly, homodimer. Probably interacts with PlsY.

It localises to the cytoplasm. It catalyses the reaction a fatty acyl-[ACP] + phosphate = an acyl phosphate + holo-[ACP]. Its pathway is lipid metabolism; phospholipid metabolism. In terms of biological role, catalyzes the reversible formation of acyl-phosphate (acyl-PO(4)) from acyl-[acyl-carrier-protein] (acyl-ACP). This enzyme utilizes acyl-ACP as fatty acyl donor, but not acyl-CoA. In Phenylobacterium zucineum (strain HLK1), this protein is Phosphate acyltransferase.